A 522-amino-acid chain; its full sequence is uncharacterized protein (522 aa).

This is an uncharacterized protein from Sinorhizobium fredii (strain NBRC 101917 / NGR234).